Here is a 358-residue protein sequence, read N- to C-terminus: Protein SRG1 (358 aa).

The Fe2OG dioxygenase domain maps to 209–309 (SVQSMRMNYY…RLSIATFHNV (101 aa)). Fe cation is bound by residues His233, Asp235, and His290.

The protein belongs to the iron/ascorbate-dependent oxidoreductase family. In terms of tissue distribution, low expression in roots and leaves.

This Arabidopsis thaliana (Mouse-ear cress) protein is Protein SRG1 (SRG1).